A 165-amino-acid chain; its full sequence is K(+)/H(+) antiporter subunit KhtT (165 aa).

Residues 76–161 (LESIEMAFSD…LKKLIHDFLS (86 aa)) form the RCK C-terminal domain.

In terms of assembly, the transporter is composed of the integral membrane protein KhtU and the regulatory protein KhtT.

It is found in the cell membrane. Binds cyclic di-AMP (c-di-AMP), which may regulate the activity. Required for activity of the potassium/proton antiporter KhtU. Involved in protection of the cell from methylglyoxal, a toxic by-product of glycolysis. The polypeptide is K(+)/H(+) antiporter subunit KhtT (Bacillus subtilis (strain 168)).